We begin with the raw amino-acid sequence, 427 residues long: ATP-dependent RNA helicase DDX39A (427 aa).

The span at Met-1–Pro-19 shows a compositional bias: acidic residues. The tract at residues Met-1–Lys-35 is disordered. Ala-2 carries the N-acetylalanine modification. Lys-31 is covalently cross-linked (Glycyl lysine isopeptide (Lys-Gly) (interchain with G-Cter in SUMO2)). Residue Lys-35 is modified to N6-acetyllysine; alternate. A Glycyl lysine isopeptide (Lys-Gly) (interchain with G-Cter in SUMO2); alternate cross-link involves residue Lys-35. Residue Ser-37 is modified to Phosphoserine. A Q motif motif is present at residues Ser-44–His-72. A Helicase ATP-binding domain is found at Ile-75–Val-248. ATP is bound at residue Ala-88–Thr-95. Residues Lys-154 and Lys-162 each participate in a glycyl lysine isopeptide (Lys-Gly) (interchain with G-Cter in SUMO2) cross-link. Thr-171 is subject to Phosphothreonine. The short motif at Asp-195 to Asp-198 is the DECD box element. Residues Lys-240 and Lys-255 each participate in a glycyl lysine isopeptide (Lys-Gly) (interchain with G-Cter in SUMO2) cross-link. The Helicase C-terminal domain occupies Gly-260–Thr-421. Ser-426 is subject to Phosphoserine.

This sequence belongs to the DEAD box helicase family. DECD subfamily. Binds ALYREF/THOC4 and DDX39B/BAT1. Interacts with the apo-AREX complex component SARNP. Interacts with MX1. Interacts with MCM3AP isoform GANP. Interacts with ECD. Interacts with PHAX; this interaction stimulates PHAX RNA binding activity. SUMOylated by RANBP2; SUMOylation modification affects its ability to bind RNA.

It localises to the nucleus. The protein resides in the cytoplasm. It carries out the reaction ATP + H2O = ADP + phosphate + H(+). Functionally, helicase that plays an essential role in mRNA export and is involved in multiple steps in RNA metabolism including alternative splicing. Regulates nuclear mRNA export to the cytoplasm through association with ECD. Also involved in spliceosomal uridine-rich small nuclear RNA (U snRNA) export by stimulating the RNA binding of adapter PHAX. Plays a role in the negative regulation of type I IFN production by increasing the nuclear retention of antiviral transcripts and thus reducing their protein expression. Independently of the interferon pathway, plays an antiviral role against alphaviruses by binding to a 5' conserved sequence element in the viral genomic RNA. In Rattus norvegicus (Rat), this protein is ATP-dependent RNA helicase DDX39A (Ddx39a).